The following is a 347-amino-acid chain: MRAELPKRVVVERGALQFLPEVLRELGCSKTVVVTDSGVWSVVGSVVEGALRGLAYEVVYIEAADNSNVERARSAARRVEACAVAGLGGGRPVDVAKYAAFMEGLPFVSVPTAISHDGFASPIVALKDPEGNPLSIFTRPPAAVLVDLAVVSRAPRRLLASGVGDIVGKVTSVADARLAQRLTGEEVPEVALRMAETAARMVLDEVDEIASWTERGVGVLAQAGLLAGMAMAVAGSSRPCSGSEHLFSHSLDKYVPWKKSLHGEQVGVGAIIASYLHGFNWRVIRDALAKVGAPTTVEGLGVTGEDAVRALLKARELRKRFTILDVVELNEGLAWKVLRETGVAPTA.

Residues 90-94 and 112-115 each bind NAD(+); these read GRPVD and TAIS. Asp117 provides a ligand contact to substrate. NAD(+) is bound at residue Ser121. Asp165 provides a ligand contact to substrate. Asp165 and His245 together coordinate Zn(2+). His249 contacts substrate. Zn(2+) is bound at residue His262.

The protein belongs to the glycerol-1-phosphate dehydrogenase family. In terms of assembly, homodimer. Zn(2+) is required as a cofactor.

Its subcellular location is the cytoplasm. It catalyses the reaction sn-glycerol 1-phosphate + NAD(+) = dihydroxyacetone phosphate + NADH + H(+). The catalysed reaction is sn-glycerol 1-phosphate + NADP(+) = dihydroxyacetone phosphate + NADPH + H(+). It participates in membrane lipid metabolism; glycerophospholipid metabolism. Catalyzes the NAD(P)H-dependent reduction of dihydroxyacetonephosphate (DHAP or glycerone phosphate) to glycerol 1-phosphate (G1P). The G1P thus generated is used as the glycerophosphate backbone of phospholipids in the cellular membranes of Archaea. In Thermofilum pendens (strain DSM 2475 / Hrk 5), this protein is Glycerol-1-phosphate dehydrogenase [NAD(P)+].